The sequence spans 203 residues: NAD(P)H dehydrogenase (quinone) (203 aa).

The Flavodoxin-like domain occupies 3 to 194 (VLIVYYSMYG…AGARFQGRYV (192 aa)). Residues 9 to 14 (SMYGHI) and 82 to 84 (TRF) contribute to the FMN site. Position 11 (Tyr-11) interacts with NAD(+). Residue Trp-102 participates in substrate binding. FMN contacts are provided by residues 117–123 (SSATQHG) and His-138.

This sequence belongs to the WrbA family. Requires FMN as cofactor.

It catalyses the reaction a quinone + NADH + H(+) = a quinol + NAD(+). It carries out the reaction a quinone + NADPH + H(+) = a quinol + NADP(+). The protein is NAD(P)H dehydrogenase (quinone) of Geobacter sulfurreducens (strain ATCC 51573 / DSM 12127 / PCA).